A 71-amino-acid chain; its full sequence is Translation initiation factor IF-1 (71 aa).

An S1-like domain is found at 1–71 (MSKDDLIQFT…LTKGRVIHRH (71 aa)).

Belongs to the IF-1 family. In terms of assembly, component of the 30S ribosomal translation pre-initiation complex which assembles on the 30S ribosome in the order IF-2 and IF-3, IF-1 and N-formylmethionyl-tRNA(fMet); mRNA recruitment can occur at any time during PIC assembly.

It localises to the cytoplasm. One of the essential components for the initiation of protein synthesis. Stabilizes the binding of IF-2 and IF-3 on the 30S subunit to which N-formylmethionyl-tRNA(fMet) subsequently binds. Helps modulate mRNA selection, yielding the 30S pre-initiation complex (PIC). Upon addition of the 50S ribosomal subunit IF-1, IF-2 and IF-3 are released leaving the mature 70S translation initiation complex. The sequence is that of Translation initiation factor IF-1 from Rickettsia felis (strain ATCC VR-1525 / URRWXCal2) (Rickettsia azadi).